We begin with the raw amino-acid sequence, 437 residues long: Adenylosuccinate synthetase (437 aa).

GTP is bound by residues 13-19 and 41-43; these read GDEGKGK and GHT. D14 functions as the Proton acceptor in the catalytic mechanism. Mg(2+) is bound by residues D14 and G41. IMP is bound by residues 14-17, 39-42, T130, R144, Q225, T240, and R310; these read DEGK and NAGH. H42 serves as the catalytic Proton donor. Substrate is bound at residue 306–312; the sequence is ATTGRLR. GTP contacts are provided by residues R312, 338 to 340, and 421 to 423; these read KLD and STG.

Belongs to the adenylosuccinate synthetase family. Homodimer. The cofactor is Mg(2+).

The protein localises to the cytoplasm. It catalyses the reaction IMP + L-aspartate + GTP = N(6)-(1,2-dicarboxyethyl)-AMP + GDP + phosphate + 2 H(+). It participates in purine metabolism; AMP biosynthesis via de novo pathway; AMP from IMP: step 1/2. Plays an important role in the de novo pathway of purine nucleotide biosynthesis. Catalyzes the first committed step in the biosynthesis of AMP from IMP. The protein is Adenylosuccinate synthetase of Psychromonas ingrahamii (strain DSM 17664 / CCUG 51855 / 37).